Here is a 559-residue protein sequence, read N- to C-terminus: NXPE family member 2 (559 aa).

A helical membrane pass occupies residues 17 to 37; the sequence is AIARKLLLMLTFILIFWIIYL.

The protein belongs to the NXPE family.

Its subcellular location is the membrane. The sequence is that of NXPE family member 2 (NXPE2) from Homo sapiens (Human).